The primary structure comprises 445 residues: Glycerophosphocholine choline phosphodiesterase ENPP6 (445 aa).

A signal peptide spans 1–22; sequence MAGKLGVLLLALVLSLAQPASA. Positions 32, 71, and 92 each coordinate substrate. Zn(2+) contacts are provided by Asp-32 and Ser-71. Catalysis depends on Ser-71, which acts as the Nucleophile. Ser-71 is modified (phosphoserine). Residues Asn-100 and Asn-118 are each glycosylated (N-linked (GlcNAc...) asparagine). Cys-142 and Cys-154 are oxidised to a cystine. Asp-193 contacts substrate. The Zn(2+) site is built by Asp-193, His-197, Asp-240, and His-241. His-241 contacts substrate. Asn-341 is a glycosylation site (N-linked (GlcNAc...) asparagine). Residue His-356 participates in substrate binding. Position 356 (His-356) interacts with Zn(2+). An N-linked (GlcNAc...) asparagine glycan is attached at Asn-406. Ser-421 is lipidated: GPI-anchor amidated serine. A propeptide spans 422 to 445 (removed in mature form); sequence SAPGAPPCACALVTVLLVLLAILA.

This sequence belongs to the nucleotide pyrophosphatase/phosphodiesterase family. As to quaternary structure, homodimer; disulfide-linked. Homotetramer. Zn(2+) serves as cofactor.

It is found in the cell membrane. The enzyme catalyses sn-glycerol 3-phosphocholine + H2O = phosphocholine + glycerol + H(+). It catalyses the reaction a 1-acyl-sn-glycero-3-phosphocholine + H2O = a 1-acyl-sn-glycerol + phosphocholine + H(+). It carries out the reaction a 1-O-alkyl-sn-glycero-3-phosphocholine + H2O = a 1-O-alkyl-sn-glycerol + phosphocholine + H(+). The catalysed reaction is 1-dodecanoyl-sn-glycero-3-phosphocholine + H2O = 1-dodecanoyl-sn-glycerol + phosphocholine + H(+). The enzyme catalyses 1-hexadecanoyl-sn-glycero-3-phosphocholine + H2O = 1-hexadecanoyl-sn-glycerol + phosphocholine + H(+). It catalyses the reaction 1-(5Z,8Z,11Z,14Z-eicosatetraenoyl)-sn-glycero-3-phosphocholine + H2O = 1-(5Z,8Z,11Z,14Z-eicosatetraenoyl)-sn-glycerol + phosphocholine + H(+). It carries out the reaction 1-tetradecanoyl-sn-glycero-3-phosphocholine + H2O = 1-tetradecanoyl-sn-glycerol + phosphocholine + H(+). The catalysed reaction is sphing-4-enine-phosphocholine + H2O = sphing-4-enine + phosphocholine + H(+). The enzyme catalyses 1-(9Z-octadecenoyl)-sn-glycero-3-phosphocholine + H2O = 1-(9Z-octadecenoyl)-sn-glycerol + phosphocholine + H(+). It catalyses the reaction 1-(9Z,12Z)-octadecadienoyl-sn-glycero-3-phosphocholine + H2O = 1-(9Z,12Z-octadecadienoyl)-sn-glycerol + phosphocholine + H(+). It carries out the reaction glycero-2-phosphocholine + H2O = phosphocholine + glycerol + H(+). With respect to regulation, inhibited by EDTA and EGTA in vitro. Functionally, choline-specific glycerophosphodiesterase that hydrolyzes glycerophosphocholine (GPC) and lysophosphatidylcholine (LPC) and contributes to supplying choline to the cells. Has a preference for LPC with short (12:0 and 14:0) or polyunsaturated (18:2 and 20:4) fatty acids. In vitro, hydrolyzes only choline-containing lysophospholipids, such as sphingosylphosphorylcholine (SPC), platelet-activating factor (PAF) and lysoPAF, but not other lysophospholipids. The protein is Glycerophosphocholine choline phosphodiesterase ENPP6 of Bos taurus (Bovine).